A 603-amino-acid chain; its full sequence is Autophagy-related protein 13a (603 aa).

Serine 248 bears the Phosphoserine mark. 2 disordered regions span residues 258 to 477 (PSPG…DDLD) and 498 to 518 (SHSL…PLGR). Over residues 301–315 (ATPNQSFSPAQSHQL) the composition is skewed to polar residues. Positions 320–331 (HDFHWSRTDAFG) are enriched in basic and acidic residues. 2 stretches are compositionally biased toward polar residues: residues 371–386 (IPSS…SNFS) and 419–437 (SSRS…PTQK). The segment covering 453 to 473 (LSSSDSPRFAFSRSPSRLSSQ) has biased composition (low complexity).

The protein belongs to the ATG13 family. Plant subfamily. In terms of assembly, interacts with ATG1A. Interacts with ATG11 and ATG101. Post-translationally, phosphorylated during nutrient starvation. Dephosphorylated in nutrient-rich conditions.

It is found in the cytoplasmic vesicle. The protein localises to the autophagosome. Its function is as follows. Involved in autophagy in a nutritional condition dependent manner. The ATG1-ATG13 protein kinase complex regulates downstream events required for autophagosome enclosure and/or vacuolar delivery. Becomes a target of autophagy under nutrient starvation. Connects autophagy to plant nutritional status. The chain is Autophagy-related protein 13a from Arabidopsis thaliana (Mouse-ear cress).